We begin with the raw amino-acid sequence, 1035 residues long: Valine--tRNA ligase (1035 aa).

The 'HIGH' region motif lies at 45-55 (PNVTGALHLGH). Residues 253–281 (EKLSDANEKEAVDLNKQIEALQKRREERL) are a coiled coil. Lys619 serves as a coordination point for ATP. The stretch at 967-1035 (DVEAELARLE…QDILKLQSKK (69 aa)) forms a coiled coil.

Belongs to the class-I aminoacyl-tRNA synthetase family. ValS type 1 subfamily. Monomer.

It localises to the cytoplasm. The catalysed reaction is tRNA(Val) + L-valine + ATP = L-valyl-tRNA(Val) + AMP + diphosphate. Its function is as follows. Catalyzes the attachment of valine to tRNA(Val). As ValRS can inadvertently accommodate and process structurally similar amino acids such as threonine, to avoid such errors, it has a 'posttransfer' editing activity that hydrolyzes mischarged Thr-tRNA(Val) in a tRNA-dependent manner. This Rhodopirellula baltica (strain DSM 10527 / NCIMB 13988 / SH1) protein is Valine--tRNA ligase.